The chain runs to 484 residues: Protein nucleotidyltransferase YdiU (484 aa).

ATP is bound by residues glycine 81, glycine 83, arginine 84, lysine 103, aspartate 115, glycine 116, arginine 166, and arginine 173. The active-site Proton acceptor is the aspartate 244. Mg(2+) contacts are provided by asparagine 245 and aspartate 254. Aspartate 254 serves as a coordination point for ATP.

This sequence belongs to the SELO family. Mg(2+) is required as a cofactor. The cofactor is Mn(2+).

It carries out the reaction L-seryl-[protein] + ATP = 3-O-(5'-adenylyl)-L-seryl-[protein] + diphosphate. The enzyme catalyses L-threonyl-[protein] + ATP = 3-O-(5'-adenylyl)-L-threonyl-[protein] + diphosphate. It catalyses the reaction L-tyrosyl-[protein] + ATP = O-(5'-adenylyl)-L-tyrosyl-[protein] + diphosphate. The catalysed reaction is L-histidyl-[protein] + UTP = N(tele)-(5'-uridylyl)-L-histidyl-[protein] + diphosphate. It carries out the reaction L-seryl-[protein] + UTP = O-(5'-uridylyl)-L-seryl-[protein] + diphosphate. The enzyme catalyses L-tyrosyl-[protein] + UTP = O-(5'-uridylyl)-L-tyrosyl-[protein] + diphosphate. Its function is as follows. Nucleotidyltransferase involved in the post-translational modification of proteins. It can catalyze the addition of adenosine monophosphate (AMP) or uridine monophosphate (UMP) to a protein, resulting in modifications known as AMPylation and UMPylation. The sequence is that of Protein nucleotidyltransferase YdiU from Shewanella baltica (strain OS223).